Reading from the N-terminus, the 538-residue chain is Putative cysteine ligase BshC (538 aa).

It belongs to the BshC family.

Its function is as follows. Involved in bacillithiol (BSH) biosynthesis. May catalyze the last step of the pathway, the addition of cysteine to glucosamine malate (GlcN-Mal) to generate BSH. This chain is Putative cysteine ligase BshC, found in Halalkalibacterium halodurans (strain ATCC BAA-125 / DSM 18197 / FERM 7344 / JCM 9153 / C-125) (Bacillus halodurans).